We begin with the raw amino-acid sequence, 425 residues long: Serine--tRNA ligase (425 aa).

Position 233–235 (233–235) interacts with L-serine; it reads TAE. Residue 264–266 participates in ATP binding; it reads RRE. Residue glutamate 287 participates in L-serine binding. An ATP-binding site is contributed by 351-354; sequence EISS. Serine 385 serves as a coordination point for L-serine.

The protein belongs to the class-II aminoacyl-tRNA synthetase family. Type-1 seryl-tRNA synthetase subfamily. As to quaternary structure, homodimer. The tRNA molecule binds across the dimer.

The protein resides in the cytoplasm. The enzyme catalyses tRNA(Ser) + L-serine + ATP = L-seryl-tRNA(Ser) + AMP + diphosphate + H(+). It catalyses the reaction tRNA(Sec) + L-serine + ATP = L-seryl-tRNA(Sec) + AMP + diphosphate + H(+). The protein operates within aminoacyl-tRNA biosynthesis; selenocysteinyl-tRNA(Sec) biosynthesis; L-seryl-tRNA(Sec) from L-serine and tRNA(Sec): step 1/1. Its function is as follows. Catalyzes the attachment of serine to tRNA(Ser). Is also able to aminoacylate tRNA(Sec) with serine, to form the misacylated tRNA L-seryl-tRNA(Sec), which will be further converted into selenocysteinyl-tRNA(Sec). This chain is Serine--tRNA ligase, found in Prochlorococcus marinus (strain MIT 9515).